A 233-amino-acid chain; its full sequence is Pathogenesis-related thaumatin-like protein 3.2 (233 aa).

Residues 1–22 (MARAMHTVWIALVPTLFVFLQG) form the signal peptide. Intrachain disulfides connect cysteine 36–cysteine 232, cysteine 77–cysteine 87, cysteine 92–cysteine 98, cysteine 145–cysteine 221, cysteine 151–cysteine 204, cysteine 159–cysteine 169, cysteine 173–cysteine 182, and cysteine 183–cysteine 191. N-linked (GlcNAc...) asparagine glycosylation is present at asparagine 195.

The protein belongs to the thaumatin family. In terms of tissue distribution, strongly expressed in roots and in female and male strobili, and, to a lower extent, in cotyledons, leaves, stems and pollen grains.

Functionally, may be involved in disease resistance. This Cryptomeria japonica (Japanese cedar) protein is Pathogenesis-related thaumatin-like protein 3.2.